The chain runs to 157 residues: uncharacterized protein (157 aa).

This is an uncharacterized protein from Pseudoalteromonas espejiana (Bacteriophage PM2).